A 528-amino-acid chain; its full sequence is Protein MGF 505-7R (528 aa).

ANK repeat units follow at residues 54–83, 129–158, 261–290, 292–321, and 322–352; these read SIND…NLHY, GCDL…LLNV, SVKR…IPRG, IERL…YKVK, and NVKK…LLDA.

It belongs to the asfivirus MGF 505 family. In terms of assembly, interacts with host STING1. Interacts with host JAK1; this interaction leads to JAK1 degradation. Interacts with host JAK2; this interaction leads to JAK2 degradation. Interacts with host RELA; this interaction inhibits NF-kappa-B promoter activity.

The protein resides in the host cytoplasm. In terms of biological role, plays a role in virus cell tropism, and may be required for efficient virus replication in macrophages. Interferes with host NF-kappa-B promoter activity mediated by TLR8. Mechanistically, inhibits the phosphorylation and subsequent nuclear translocation of host NF-kappa-B RELA subunit downstream of TLR8. Promotes the expression of the autophagy-related protein host ULK1 to degrade host STING and inhibit the interferon response. Inhibits also JAK1- and JAK2-mediated signaling and thus negatively regulates the IFN-gamma signaling. This chain is Protein MGF 505-7R, found in African swine fever virus (strain Badajoz 1971 Vero-adapted) (Ba71V).